We begin with the raw amino-acid sequence, 98 residues long: Bombyxin A-3 homolog (98 aa).

The signal sequence occupies residues 1–18; that stretch reads MRTQVLFLVLEVAAMASG. Cystine bridges form between cysteine 26-cysteine 85, cysteine 38-cysteine 98, and cysteine 84-cysteine 89. Residues 47–75 constitute a propeptide, c peptide like; the sequence is TPYTSSESEGYGWRWLAPQRARQLAGARG.

This sequence belongs to the insulin family. As to quaternary structure, heterodimer of a B chain and an A chain linked by two disulfide bonds.

It localises to the secreted. In terms of biological role, brain peptide responsible for activation of prothoracic glands to produce ecdysone in insects. The chain is Bombyxin A-3 homolog (SBXA3) from Samia cynthia (Ailanthus silkmoth).